We begin with the raw amino-acid sequence, 306 residues long: tRNA pseudouridine synthase B (306 aa).

Asp48 acts as the Nucleophile in catalysis.

Belongs to the pseudouridine synthase TruB family. Type 1 subfamily.

The enzyme catalyses uridine(55) in tRNA = pseudouridine(55) in tRNA. Its function is as follows. Responsible for synthesis of pseudouridine from uracil-55 in the psi GC loop of transfer RNAs. In Chromobacterium violaceum (strain ATCC 12472 / DSM 30191 / JCM 1249 / CCUG 213 / NBRC 12614 / NCIMB 9131 / NCTC 9757 / MK), this protein is tRNA pseudouridine synthase B.